A 225-amino-acid polypeptide reads, in one-letter code: Dimerizing cyclase tstC (225 aa).

The signal sequence occupies residues methionine 1 to alanine 19. Residues asparagine 146, asparagine 195, and asparagine 217 are each glycosylated (N-linked (GlcNAc...) asparagine).

Belongs to the dimerizing cyclase tstC family.

It carries out the reaction 2 [4-(deca-1,8-diyl)-2,5-dioxo-2,5-dihydro-3-furanyl]acetate + H(+) = 2-[(1R,8S,14R,15R)-11-hydroxy-14,15-bis[(6E)-oct-6-en-1-yl]-3,5,9-trioxo-4,10-dioxatetracyclo[9.4.0.0(2,6).0(8,12)]pentadeca-2(6),12-dien-8-yl]acetate + CO2. It participates in secondary metabolite biosynthesis. Dimerizing cyclase; part of the gene cluster that mediates the biosynthesis of the antihypercholesterolemic agents phomoidrides which are dimeric anhydrides. Within the pathway, tstC produces the bicyclo[4.3.1]deca-1,6-diene core of phomoidrides via the dimerization of the monomeric anhydrides leading to prephomoidride. The pathway begins with the highly reducing polyketide synthase tstA that catalyzes the formation of a C12-fatty acyl-ACP, starting from one acetate and 5 malonate units. The hydrolase tstM is involved in the release of the C12-fatty acyl chain from phiA. The alkylcitrate synthase (ACS) tstJ and the alkylcitrate dehydratase (ACDH) tstI then give rise to decarboxylated monomeric anhydrides by coupling the C12-fatty acyl chain with oxalacetic acid. The cyclase tstC is responsible for the dimerization of the monomeric anhydrides which leads to the production of prephomoidride that contains the characteristic bicyclo[4.3.1]deca-1,6-diene system of phomoidrides. Iterative oxidation catalyzed by the alpha-ketoglutarate-dependent dioxygenase tstK produced then phomoidride A. Finally, the methyltransferase tstE converts phomoidride A to phomoidride B via an acetalization reaction. The phosphatidylethanolamine-binding protein tstB and tstN are not essential for dimerization and their functions have still to be determined. This is Dimerizing cyclase tstC from Talaromyces stipitatus (strain ATCC 10500 / CBS 375.48 / QM 6759 / NRRL 1006) (Penicillium stipitatum).